Here is a 401-residue protein sequence, read N- to C-terminus: Dual-specificity RNA methyltransferase RlmN (401 aa).

E114 (proton acceptor) is an active-site residue. One can recognise a Radical SAM core domain in the interval 120–365; the sequence is DKTRGTLCVS…TMVRRTRGDD (246 aa). An intrachain disulfide couples C127 to C370. 3 residues coordinate [4Fe-4S] cluster: C134, C138, and C141. Residues 187–188, S219, 241–243, and N327 contribute to the S-adenosyl-L-methionine site; these read GE and SLH. The active-site S-methylcysteine intermediate is the C370.

This sequence belongs to the radical SAM superfamily. RlmN family. Requires [4Fe-4S] cluster as cofactor.

The protein localises to the cytoplasm. It carries out the reaction adenosine(2503) in 23S rRNA + 2 reduced [2Fe-2S]-[ferredoxin] + 2 S-adenosyl-L-methionine = 2-methyladenosine(2503) in 23S rRNA + 5'-deoxyadenosine + L-methionine + 2 oxidized [2Fe-2S]-[ferredoxin] + S-adenosyl-L-homocysteine. The catalysed reaction is adenosine(37) in tRNA + 2 reduced [2Fe-2S]-[ferredoxin] + 2 S-adenosyl-L-methionine = 2-methyladenosine(37) in tRNA + 5'-deoxyadenosine + L-methionine + 2 oxidized [2Fe-2S]-[ferredoxin] + S-adenosyl-L-homocysteine. Functionally, specifically methylates position 2 of adenine 2503 in 23S rRNA and position 2 of adenine 37 in tRNAs. m2A2503 modification seems to play a crucial role in the proofreading step occurring at the peptidyl transferase center and thus would serve to optimize ribosomal fidelity. The sequence is that of Dual-specificity RNA methyltransferase RlmN from Stenotrophomonas maltophilia (strain K279a).